Here is an 829-residue protein sequence, read N- to C-terminus: MAKEAASSPLEDLDLSGEEVQRLTSAFQDPEFRRMFSEYAEELTDPENRRRYEEEITALERERGVEVRFVHPEPGHVLRTSLDGTRRCFVNVCSNALVGAPSSQPGSGSAVSGRQWSLPYSLAPGREYAWGRGTRYTVYDVVFHPDAIALARRHERFRQMLDATALEAVEKQFGVKLDRRNAKTLKIKYKGTPDAAVLRTPLPGGAPARPEGEPESPFPDFPYPYRYPAAGASAAVPRPQAPSPPEAVRQPAPTEPRYSVVQRHHVDLQDYRCSRDSAPGTVPQELVVTIELPLLRSAEQAALEVTGKLLCLDSRKPDYRLRLSLPYPVDDSRGKAQFNKARRQLVVTLPVAPTASRPEPAASPEEAADPPGTDGAACASACRGEAGPAGVCAGDAISGPSRTRAADAGITTPDAPGKERVAKSEERDFGGQEISTTGTREEPPSGAGNSPGDRGGGALSTSWGDLDAGLSVGSASVRPTLGVEARETREGTGREPAYRAMGGPGTDRGEALCPPLQCSQDEESLTLLVQVPWILLQSLQGEVNPLWYKLSFSTQDLVYYSFFLQFTPENKLSTKEPEVSISSNNAVINLAKSPECHGYWREWYYGLNNYCLEERLFVNEDNVNEFLEEVLSPPFKQTLPLTPPLIEVLQVTDSKIEIHAKLQECSNSEQLHEKEERVHEGSPLTEKENTEHATISTTDSASSVAVTVLEADRCGSATCLQQGALDVSQKLFAESQQPKSEKEREFIKDKSAVYANERKDNLKEPVITEEKELDGNHPSSLLNKTAVRDTPGFDHIKETNMQDGSVQIIKDHVTHCSFSFQNNLLYDLD.

4 disordered regions span residues 197 to 255 (VLRT…APTE), 349 to 377 (LPVAPTASRPEPAASPEEAADPPGTDGAA), 400 to 465 (PSRT…SWGD), and 478 to 505 (RPTLGVEARETREGTGREPAYRAMGGPG). Positions 352 to 371 (APTASRPEPAASPEEAADPP) are enriched in low complexity. Positions 416-430 (PGKERVAKSEERDFG) are enriched in basic and acidic residues. Ser450 bears the Phosphoserine mark. A compositionally biased stretch (basic and acidic residues) spans 484–497 (EARETREGTGREPA). Ser632 is subject to Phosphoserine. The tract at residues 667 to 698 (NSEQLHEKEERVHEGSPLTEKENTEHATISTT) is disordered. A compositionally biased stretch (basic and acidic residues) spans 670–691 (QLHEKEERVHEGSPLTEKENTE).

Belongs to the PIH1 family. Kintoun subfamily. Interacts with CFAP300. Interacts with DNAI2 and HSPA1A. Interacts with DNAAF4. Interacts with DNAAF6/PIH1D3.

It localises to the cytoplasm. It is found in the dynein axonemal particle. Functionally, required for cytoplasmic pre-assembly of axonemal dyneins, thereby playing a central role in motility in cilia and flagella. Involved in pre-assembly of dynein arm complexes in the cytoplasm before intraflagellar transport loads them for the ciliary compartment. This Bos taurus (Bovine) protein is Protein kintoun.